Here is a 443-residue protein sequence, read N- to C-terminus: Putative phosphoribosyl transferase MT0597 (443 aa).

It in the N-terminal section; belongs to the purine/pyrimidine phosphoribosyltransferase family. In the C-terminal section; belongs to the dienelactone hydrolase family.

The protein is Putative phosphoribosyl transferase MT0597 of Mycobacterium tuberculosis (strain CDC 1551 / Oshkosh).